Here is a 393-residue protein sequence, read N- to C-terminus: Ceramide synthase 4 (393 aa).

The Lumenal segment spans residues 1-31 (MSFSLSEWLWQETYWLPPNVTWAELEDRDGL). An N-linked (GlcNAc...) asparagine glycan is attached at Asn-19. A helical membrane pass occupies residues 32–52 (VFAHPHHVLAAFPVALVLVAV). The segment at 67–128 (WMGVQDPIRR…RRRRNQDRPS (62 aa)) is homeobox-like. Residues 131–332 (KKFCEACWRF…ILRMLYSFLH (202 aa)) form the TLC domain. Helical transmembrane passes span 140-160 (FVFY…ESWL), 179-199 (LYWW…TLPF), 217-237 (VGLI…VVLL), and 265-285 (FIMF…TQVI). Residues 291–301 (DSIKNSGPFFG) carry the Last loop motif motif. The helical transmembrane segment at 304–324 (FFIVLLVMLQILHVYWFCLIL) threads the bilayer. Topologically, residues 325–393 (RMLYSFLHKG…CLTNGHTRAT (69 aa)) are cytoplasmic. Positions 341-393 (RSDVEEPDSSDDEPVSEGPQLKNGMARGSRVAVTNGPRSRAAACLTNGHTRAT) are disordered. Phosphoserine occurs at positions 342, 349, and 350. The span at 345 to 355 (EEPDSSDDEPV) shows a compositional bias: acidic residues.

In terms of processing, phosphorylated at the C-terminus by CK2. Ubiquitously expressed, with highest levels in skin.

The protein resides in the endoplasmic reticulum membrane. It carries out the reaction sphinganine + octadecanoyl-CoA = N-(octadecanoyl)-sphinganine + CoA + H(+). The enzyme catalyses eicosanoyl-CoA + sphinganine = N-eicosanoylsphinganine + CoA + H(+). It catalyses the reaction docosanoyl-CoA + sphinganine = N-docosanoylsphinganine + CoA + H(+). The catalysed reaction is tetracosanoyl-CoA + sphinganine = N-tetracosanoylsphinganine + CoA + H(+). It carries out the reaction hexacosanoyl-CoA + sphinganine = N-hexacosanoylsphinganine + CoA + H(+). The enzyme catalyses a fatty acyl-CoA + sphing-4-enine = an N-acylsphing-4-enine + CoA + H(+). It catalyses the reaction sphing-4-enine + octadecanoyl-CoA = N-octadecanoylsphing-4-enine + CoA + H(+). The catalysed reaction is hexadecasphinganine + octadecanoyl-CoA = N-octadecanoylhexadecasphinganine + CoA + H(+). It functions in the pathway lipid metabolism; sphingolipid metabolism. Ceramide synthase that catalyzes formation of ceramide from sphinganine and acyl-CoA substrates, with high selectivity toward long and very-long chains (C18:0-C22:0) as acyl donor. This chain is Ceramide synthase 4, found in Mus musculus (Mouse).